Here is a 432-residue protein sequence, read N- to C-terminus: Putative transposase A625R (432 aa).

Positions 375, 378, 393, and 395 each coordinate Zn(2+).

It in the N-terminal section; belongs to the transposase 2 family. This sequence in the C-terminal section; belongs to the transposase 35 family.

The protein is Putative transposase A625R of Chlorella (PBCV-1).